A 628-amino-acid chain; its full sequence is Chaperone protein HtpG (628 aa).

An a; substrate-binding region spans residues 1–337 (MSEKKYTFET…SADLPLNVSR (337 aa)). Positions 338–554 (EILQHNKVID…DYGMSLHMQK (217 aa)) are b. A c region spans residues 555–628 (MMEEAGQSFM…FVKLVNKYIR (74 aa)).

Belongs to the heat shock protein 90 family. In terms of assembly, homodimer.

It localises to the cytoplasm. Molecular chaperone. Has ATPase activity. This chain is Chaperone protein HtpG, found in Francisella tularensis subsp. tularensis (strain FSC 198).